The following is a 374-amino-acid chain: 4-hydroxy-3-methylbut-2-en-1-yl diphosphate synthase (flavodoxin) (374 aa).

[4Fe-4S] cluster-binding residues include cysteine 268, cysteine 271, cysteine 303, and glutamate 310.

Belongs to the IspG family. The cofactor is [4Fe-4S] cluster.

It catalyses the reaction (2E)-4-hydroxy-3-methylbut-2-enyl diphosphate + oxidized [flavodoxin] + H2O + 2 H(+) = 2-C-methyl-D-erythritol 2,4-cyclic diphosphate + reduced [flavodoxin]. Its pathway is isoprenoid biosynthesis; isopentenyl diphosphate biosynthesis via DXP pathway; isopentenyl diphosphate from 1-deoxy-D-xylulose 5-phosphate: step 5/6. Functionally, converts 2C-methyl-D-erythritol 2,4-cyclodiphosphate (ME-2,4cPP) into 1-hydroxy-2-methyl-2-(E)-butenyl 4-diphosphate. The chain is 4-hydroxy-3-methylbut-2-en-1-yl diphosphate synthase (flavodoxin) from Geobacillus kaustophilus (strain HTA426).